We begin with the raw amino-acid sequence, 479 residues long: Variant surface glycoprotein ILTAT 1.22 (479 aa).

The signal sequence occupies residues 1–12 (MDTAQVFALFYM). N-linked (GlcNAc...) asparagine glycosylation is found at Asn120 and Asn458. Asn462 carries the GPI-anchor amidated asparagine lipid modification. The propeptide at 463-479 (NSFAIKTSTLLLAVLLF) is removed in mature form.

It is found in the cell membrane. Functionally, VSG forms a coat on the surface of the parasite. The trypanosome evades the immune response of the host by expressing a series of antigenically distinct VSGs from an estimated 1000 VSG genes. The chain is Variant surface glycoprotein ILTAT 1.22 from Trypanosoma brucei brucei.